The chain runs to 406 residues: Multifunctional CCA protein (406 aa).

2 residues coordinate ATP: Gly-8 and Arg-11. Gly-8 and Arg-11 together coordinate CTP. Positions 21 and 23 each coordinate Mg(2+). Residues Arg-91, Arg-137, and Arg-140 each contribute to the ATP site. CTP contacts are provided by Arg-91, Arg-137, and Arg-140. Residues 225–326 (TGIHTLKVLE…LKLLNRVDAF (102 aa)) enclose the HD domain.

The protein belongs to the tRNA nucleotidyltransferase/poly(A) polymerase family. Bacterial CCA-adding enzyme type 1 subfamily. Monomer. Can also form homodimers and oligomers. Mg(2+) serves as cofactor. Ni(2+) is required as a cofactor.

It carries out the reaction a tRNA precursor + 2 CTP + ATP = a tRNA with a 3' CCA end + 3 diphosphate. It catalyses the reaction a tRNA with a 3' CCA end + 2 CTP + ATP = a tRNA with a 3' CCACCA end + 3 diphosphate. Catalyzes the addition and repair of the essential 3'-terminal CCA sequence in tRNAs without using a nucleic acid template. Adds these three nucleotides in the order of C, C, and A to the tRNA nucleotide-73, using CTP and ATP as substrates and producing inorganic pyrophosphate. tRNA 3'-terminal CCA addition is required both for tRNA processing and repair. Also involved in tRNA surveillance by mediating tandem CCA addition to generate a CCACCA at the 3' terminus of unstable tRNAs. While stable tRNAs receive only 3'-terminal CCA, unstable tRNAs are marked with CCACCA and rapidly degraded. The sequence is that of Multifunctional CCA protein from Nitrosococcus oceani (strain ATCC 19707 / BCRC 17464 / JCM 30415 / NCIMB 11848 / C-107).